The following is a 331-amino-acid chain: Homoarginine-6-hydroxylase 2-ODD-C23 (331 aa).

A Fe2OG dioxygenase domain is found at 182-289 (PFWVMRLIGY…RVSVVYFYET (108 aa)). 3 residues coordinate Fe cation: H212, D214, and H270. A 2-oxoglutarate-binding site is contributed by R280.

Belongs to the iron/ascorbate-dependent oxidoreductase family. The cofactor is Fe(2+).

It localises to the cytoplasm. Its subcellular location is the cytosol. It catalyses the reaction L-homoarginine + 2-oxoglutarate + O2 = 6-hydroxy-L-homoarginine + succinate + CO2. 2-oxoglutarate-dependent dioxygenase catalyzing homoarginine 6-hydroxylation thus producing 6-hydroxy-L-homoarginine. Guanidine (Gd) is in turn synthesized by the spontaneous conversion of 6-hydroxy-L-homoarginine to (S)-2-amino-6-oxohexanoate (RHEA:79843); guanidine is a nitrogen-rich compound that can serve as a defense or signaling substance. This chain is Homoarginine-6-hydroxylase 2-ODD-C23, found in Glycine max (Soybean).